The chain runs to 375 residues: Pectate lyase B (375 aa).

Positions 1–22 are cleaved as a signal peptide; it reads MKSLITPIAAGLLLAFSQYSLA. A disulfide bridge connects residues C93 and C176. Residues D150, D152, E187, and D191 each coordinate Ca(2+). The active site involves R240. C351 and C374 are oxidised to a cystine.

The protein belongs to the polysaccharide lyase 1 family. PLADES subfamily. Ca(2+) is required as a cofactor.

It localises to the secreted. The enzyme catalyses Eliminative cleavage of (1-&gt;4)-alpha-D-galacturonan to give oligosaccharides with 4-deoxy-alpha-D-galact-4-enuronosyl groups at their non-reducing ends.. Its pathway is glycan metabolism; pectin degradation; 2-dehydro-3-deoxy-D-gluconate from pectin: step 2/5. Functionally, involved in maceration and soft-rotting of plant tissue. This Dickeya chrysanthemi (Pectobacterium chrysanthemi) protein is Pectate lyase B (pelB).